Consider the following 335-residue polypeptide: Fructose-1,6-bisphosphatase class 1 (335 aa).

Positions 91, 113, 115, and 116 each coordinate Mg(2+). Substrate is bound by residues 116–119, Asn208, and Lys274; that span reads DGSS. Glu280 is a Mg(2+) binding site.

The protein belongs to the FBPase class 1 family. In terms of assembly, homotetramer. Mg(2+) is required as a cofactor.

Its subcellular location is the cytoplasm. The enzyme catalyses beta-D-fructose 1,6-bisphosphate + H2O = beta-D-fructose 6-phosphate + phosphate. It functions in the pathway carbohydrate biosynthesis; gluconeogenesis. The protein is Fructose-1,6-bisphosphatase class 1 of Chromobacterium violaceum (strain ATCC 12472 / DSM 30191 / JCM 1249 / CCUG 213 / NBRC 12614 / NCIMB 9131 / NCTC 9757 / MK).